The primary structure comprises 128 residues: Probable 4-amino-4-deoxy-L-arabinose-phosphoundecaprenol flippase subunit ArnF (128 aa).

The Cytoplasmic portion of the chain corresponds to 1–2 (MG). Residues 3 to 23 (LMWGLFSVIIASAAQLSLGFA) form a helical membrane-spanning segment. At 24-35 (ASHLPPMTHLWD) the chain is on the periplasmic side. A helical membrane pass occupies residues 36 to 56 (FIAALLAFGLDARILLLGLLG). Over 57 to 76 (YLLSVFCWYKTLHKLALSKA) the chain is Cytoplasmic. The chain crosses the membrane as a helical span at residues 77–97 (YALLSMSYVLVWIASMVLPGW). The Periplasmic portion of the chain corresponds to 98 to 100 (EGT). Residues 101-121 (FSLKALLGVACIMSGLMLIFL) form a helical membrane-spanning segment. At 122–128 (PTTKQRY) the chain is on the cytoplasmic side.

It belongs to the ArnF family. Heterodimer of ArnE and ArnF.

The protein localises to the cell inner membrane. It functions in the pathway bacterial outer membrane biogenesis; lipopolysaccharide biosynthesis. Its function is as follows. Translocates 4-amino-4-deoxy-L-arabinose-phosphoundecaprenol (alpha-L-Ara4N-phosphoundecaprenol) from the cytoplasmic to the periplasmic side of the inner membrane. This Escherichia coli O127:H6 (strain E2348/69 / EPEC) protein is Probable 4-amino-4-deoxy-L-arabinose-phosphoundecaprenol flippase subunit ArnF.